The following is an 86-amino-acid chain: Large ribosomal subunit protein bL27 (86 aa).

Residues 1–23 (MAHKKGTGSTRNGRDSNSKRLGV) form a disordered region.

The protein belongs to the bacterial ribosomal protein bL27 family.

The protein is Large ribosomal subunit protein bL27 of Prochlorococcus marinus (strain MIT 9515).